We begin with the raw amino-acid sequence, 561 residues long: uncharacterized protein (561 aa).

Disordered regions lie at residues 369–390 (SVPE…LSKG) and 429–515 (EGLG…GESE). At Ser383 the chain carries Phosphoserine. Residues 465-503 (NISPESSRFGTPSDPNSSSQSLGNEVLSRPNSNSNSAES) show a composition bias toward polar residues.

This is an uncharacterized protein from Schizosaccharomyces pombe (strain 972 / ATCC 24843) (Fission yeast).